A 257-amino-acid polypeptide reads, in one-letter code: GTP cyclohydrolase FolE2 (257 aa).

This sequence belongs to the GTP cyclohydrolase IV family.

The enzyme catalyses GTP + H2O = 7,8-dihydroneopterin 3'-triphosphate + formate + H(+). It functions in the pathway cofactor biosynthesis; 7,8-dihydroneopterin triphosphate biosynthesis; 7,8-dihydroneopterin triphosphate from GTP: step 1/1. Its function is as follows. Converts GTP to 7,8-dihydroneopterin triphosphate. In Kosmotoga olearia (strain ATCC BAA-1733 / DSM 21960 / TBF 19.5.1), this protein is GTP cyclohydrolase FolE2.